The sequence spans 199 residues: Large ribosomal subunit protein bL25 (199 aa).

Belongs to the bacterial ribosomal protein bL25 family. CTC subfamily. As to quaternary structure, part of the 50S ribosomal subunit; part of the 5S rRNA/L5/L18/L25 subcomplex. Contacts the 5S rRNA. Binds to the 5S rRNA independently of L5 and L18.

Functionally, this is one of the proteins that binds to the 5S RNA in the ribosome where it forms part of the central protuberance. In Pseudomonas fluorescens (strain ATCC BAA-477 / NRRL B-23932 / Pf-5), this protein is Large ribosomal subunit protein bL25.